Here is a 391-residue protein sequence, read N- to C-terminus: Ribosomal RNA small subunit methyltransferase H (391 aa).

Positions 1 to 23 are disordered; that stretch reads MDVDVQDDVQGRAGEGAEERAHD. Residues 59-61, D78, L112, D126, and Q133 each bind S-adenosyl-L-methionine; that span reads GGH. A disordered region spans residues 284–391; that stretch reads SSSSAPPDLP…EPGATVERTP (108 aa). Residues 368 to 380 show a composition bias toward basic and acidic residues; sequence RTQEFETHPHLEP.

Belongs to the methyltransferase superfamily. RsmH family.

The protein resides in the cytoplasm. The catalysed reaction is cytidine(1402) in 16S rRNA + S-adenosyl-L-methionine = N(4)-methylcytidine(1402) in 16S rRNA + S-adenosyl-L-homocysteine + H(+). Its function is as follows. Specifically methylates the N4 position of cytidine in position 1402 (C1402) of 16S rRNA. In Kineococcus radiotolerans (strain ATCC BAA-149 / DSM 14245 / SRS30216), this protein is Ribosomal RNA small subunit methyltransferase H.